A 440-amino-acid chain; its full sequence is Streptokinase C (440 aa).

An N-terminal signal peptide occupies residues 1–26 (MKNYLSFGMFALLFALTFGTVNSVQA).

Functionally, this protein is not a protease, but it activates plasminogen by complexing with it. As a potential virulence factor, it is thought to prevent the formation of effective fibrin barriers around the site of infection, thereby contributing to the invasiveness of the cells. This Streptococcus dysgalactiae subsp. equisimilis (Streptococcus equisimilis) protein is Streptokinase C (skc).